We begin with the raw amino-acid sequence, 58 residues long: UPF0339 protein TDE_0826 (58 aa).

The protein belongs to the UPF0339 family.

The protein is UPF0339 protein TDE_0826 of Treponema denticola (strain ATCC 35405 / DSM 14222 / CIP 103919 / JCM 8153 / KCTC 15104).